Reading from the N-terminus, the 671-residue chain is Probable potassium transport system protein Kup 2 (671 aa).

A run of 12 helical transmembrane segments spans residues 18-38, 60-80, 103-123, 149-169, 173-193, 218-238, 252-272, 292-312, 343-363, 373-393, 402-422, and 424-444; these read GFLIALGIVYGDIGTSPLYAM, VSLVIWTLTLITTVKYVLIAL, WLIVPAMIGGATLLADGALTP, VTTLIILAFLFLIQRFGASLV, FGPIMFIWFGFLGVSGLINSF, AGFFILGSIFLVTTGAEALYS, WPFVKICIILSYCGQGAWLLA, MVIYVVILSTLAAIIASQALI, LYIPAVNFALWVTTSFFVLYF, YSLAITITMLMTTTLLTYFLI, IAFISIGLFCIEGSFFAASLV, and FINGAYIVVLIALAIIFVMFI.

Belongs to the HAK/KUP transporter (TC 2.A.72) family.

Its subcellular location is the cell membrane. The catalysed reaction is K(+)(in) + H(+)(in) = K(+)(out) + H(+)(out). Transport of potassium into the cell. Likely operates as a K(+):H(+) symporter. This is Probable potassium transport system protein Kup 2 from Lactococcus lactis subsp. cremoris (strain MG1363).